The following is a 161-amino-acid chain: uncharacterized protein (161 aa).

4 helical membrane passes run 22 to 42 (LFFI…VFGH), 43 to 63 (LTVG…ALLV), 89 to 109 (LAII…AGLG), and 110 to 130 (VVFG…LPVL). The disordered stretch occupies residues 141–161 (VATYSSNGQTGGSEGRSASDD).

The protein to M.leprae ML1138.

Its subcellular location is the cell membrane. This is an uncharacterized protein from Mycobacterium bovis (strain ATCC BAA-935 / AF2122/97).